The following is a 587-amino-acid chain: Prolycopene isomerase 1, chloroplastic (587 aa).

Low complexity predominate over residues 1–13 (MLCLSLNSSSTSP). Residues 1-21 (MLCLSLNSSSTSPPKSPLHHS) are disordered. The transit peptide at 1-50 (MLCLSLNSSSTSPPKSPLHHSFSRRSMRSWVCSPRVQRKKLGFWSSPKAV) directs the protein to the chloroplast.

The protein belongs to the carotenoid/retinoid oxidoreductase family. CrtISO subfamily. NAD(+) is required as a cofactor. It depends on NADP(+) as a cofactor. The cofactor is FAD. In terms of tissue distribution, up-regulated in the flower buds and flower lip tissue, while it is weakly expressed in leaves.

The protein resides in the plastid. It is found in the chloroplast membrane. It carries out the reaction 7,7',9,9'-tetra-cis-lycopene = all-trans-lycopene. The protein operates within carotenoid biosynthesis; lycopene biosynthesis. In terms of biological role, carotene cis-trans-isomerase that converts 7,9,9'-tri-cis-neurosporene to 9'-cis-neurosporene and 7,9,9',7'-tetra-cis-lycopene (also known as prolycopene) into all-trans-lycopene. Isomerization requires redox-active components, suggesting that isomerization is achieved by a reversible redox reaction acting at specific double bonds. Isomerizes adjacent cis-double bonds at C7 and C9 pairwise into the trans-configuration, but is incapable of isomerizing single cis-double bonds at C9 and C9'. The polypeptide is Prolycopene isomerase 1, chloroplastic (CRTISO1) (Oncidium hybrid cultivar (Orchid)).